Reading from the N-terminus, the 596-residue chain is Uptake hydrogenase large subunit (596 aa).

Positions 75, 78, 575, and 578 each coordinate Ni(2+).

This sequence belongs to the [NiFe]/[NiFeSe] hydrogenase large subunit family. Heterodimer of a large and a small subunit. The cofactor is Ni(2+).

Its subcellular location is the cell membrane. It catalyses the reaction H2 + A = AH2. Its function is as follows. This enzyme recycles the H(2) produced by nitrogenase to increase the production of ATP and to protect nitrogenase against inhibition or damage by O(2) under carbon- or phosphate-limited conditions. The polypeptide is Uptake hydrogenase large subunit (hupB) (Bradyrhizobium diazoefficiens (strain JCM 10833 / BCRC 13528 / IAM 13628 / NBRC 14792 / USDA 110)).